We begin with the raw amino-acid sequence, 288 residues long: Cyclin-dependent kinase 2 homolog (288 aa).

Residues 4–284 (YHGLEKIGEG…AKQALEHAYF (281 aa)) form the Protein kinase domain. Residues 10-18 (IGEGTYGVV) and K32 contribute to the ATP site. T14 carries the post-translational modification Phosphothreonine. A Phosphotyrosine modification is found at Y15. The active-site Proton acceptor is the D125. Phosphothreonine is present on T158.

It belongs to the protein kinase superfamily. CMGC Ser/Thr protein kinase family. CDC2/CDKX subfamily. In terms of assembly, may form a complex composed of at least the catalytic subunit CRK2 and a cyclin. Mg(2+) is required as a cofactor.

The protein localises to the cytoplasm. The catalysed reaction is L-seryl-[protein] + ATP = O-phospho-L-seryl-[protein] + ADP + H(+). It catalyses the reaction L-threonyl-[protein] + ATP = O-phospho-L-threonyl-[protein] + ADP + H(+). It carries out the reaction [DNA-directed RNA polymerase] + ATP = phospho-[DNA-directed RNA polymerase] + ADP + H(+). Phosphorylation at Thr-14 or Tyr-15 inactivates the enzyme, while phosphorylation at Thr-158 activates it. Functionally, serine/threonine-protein kinase. Involved in the control of the cell cycle. Required for entry into S-phase and mitosis. Probable component of the kinase complex that phosphorylates the repetitive C-terminus of RNA polymerase II. The sequence is that of Cyclin-dependent kinase 2 homolog from Plasmodium vivax.